The primary structure comprises 327 residues: Phenylalanine--tRNA ligase alpha subunit (327 aa).

Residue Glu-252 participates in Mg(2+) binding.

Belongs to the class-II aminoacyl-tRNA synthetase family. Phe-tRNA synthetase alpha subunit type 1 subfamily. Tetramer of two alpha and two beta subunits. The cofactor is Mg(2+).

It localises to the cytoplasm. The enzyme catalyses tRNA(Phe) + L-phenylalanine + ATP = L-phenylalanyl-tRNA(Phe) + AMP + diphosphate + H(+). This Salmonella agona (strain SL483) protein is Phenylalanine--tRNA ligase alpha subunit.